A 322-amino-acid polypeptide reads, in one-letter code: Ribosomal lysine N-methyltransferase 5 (322 aa).

S-adenosyl-L-methionine contacts are provided by residues Trp92, 141 to 143 (GTG), Asp163, Trp214, and Met242.

The protein belongs to the class I-like SAM-binding methyltransferase superfamily. RKM5 family.

In terms of biological role, S-adenosyl-L-methionine-dependent protein-lysine N-methyltransferase that methylates 60S ribosomal protein L1. In Kluyveromyces lactis (strain ATCC 8585 / CBS 2359 / DSM 70799 / NBRC 1267 / NRRL Y-1140 / WM37) (Yeast), this protein is Ribosomal lysine N-methyltransferase 5 (RKM5).